Consider the following 418-residue polypeptide: Vasopressin V1a receptor (418 aa).

The span at 1–15 shows a compositional bias: low complexity; the sequence is MRFSGSPSPGPSNSS. The interval 1–20 is disordered; sequence MRFSGSPSPGPSNSSRWWPL. The Extracellular portion of the chain corresponds to 1–51; sequence MRFSGSPSPGPSNSSRWWPLDAGDANTSGDLAGLGEDGGPQADTRNEELAK. 2 N-linked (GlcNAc...) asparagine glycosylation sites follow: asparagine 13 and asparagine 26. Residues 52-75 form a helical membrane-spanning segment; it reads LEIAVLAVIFVVAVLGNSSVLLAL. Over 76-87 the chain is Cytoplasmic; it reads HRTPRKTSRMHL. The chain crosses the membrane as a helical span at residues 88–109; that stretch reads FIRHLSLADLAVAFFQVLPQLG. Over 110–124 the chain is Extracellular; the sequence is WDITYRFRGPDGLCR. A disulfide bridge links cysteine 123 with cysteine 202. Residues 125–146 traverse the membrane as a helical segment; that stretch reads VVKHMQVFAMFASAYMLVVMTA. The Cytoplasmic segment spans residues 147 to 167; it reads DRYIAVCHPLKTLQQPARRSR. A helical membrane pass occupies residues 168–189; it reads LMIAAAWVLSFVLSTPQYFVFS. At 190–217 the chain is on the extracellular side; that stretch reads MVEVSNVTKTYDCWANFIHPWGLPAYVT. The N-linked (GlcNAc...) asparagine glycan is linked to asparagine 195. The helical transmembrane segment at 218-238 threads the bilayer; sequence WMTGSVFVAPVVILGTCYGFI. Residues 239 to 293 lie on the Cytoplasmic side of the membrane; that stretch reads CYHIWRKVRGKTAGRQGGPAEGAGESALYRGVLHARCVSSVKTISRAKIRTVKMT. A helical membrane pass occupies residues 294 to 313; it reads FVIVTAYIVCWAPFFIIQMW. At 314–331 the chain is on the extracellular side; the sequence is SAWDKNFSWVESENPATA. Asparagine 319 carries N-linked (GlcNAc...) asparagine glycosylation. A helical transmembrane segment spans residues 332 to 351; it reads IPALLASLNSCCNPWIYMFF. Over 352 to 418 the chain is Cytoplasmic; that stretch reads SGHLLQDCAQ…KSIKFIPVST (67 aa). S-palmitoyl cysteine attachment occurs at residues cysteine 365 and cysteine 366. Residues 377–418 form a disordered region; that stretch reads GSDSMSRRQTSFTNNRSPTNSMGTWKDSPKSSKSIKFIPVST. The span at 383 to 399 shows a compositional bias: polar residues; sequence RRQTSFTNNRSPTNSMG. Serine 404 is subject to Phosphoserine.

It belongs to the G-protein coupled receptor 1 family. Vasopressin/oxytocin receptor subfamily.

It is found in the cell membrane. Receptor for arginine vasopressin. The activity of this receptor is mediated by G proteins which activate a phosphatidyl-inositol-calcium second messenger system. In Ovis aries (Sheep), this protein is Vasopressin V1a receptor (AVPR1A).